A 483-amino-acid polypeptide reads, in one-letter code: Glutamyl-tRNA(Gln) amidotransferase subunit A (483 aa).

Catalysis depends on charge relay system residues Lys-75 and Ser-150. Ser-174 serves as the catalytic Acyl-ester intermediate.

The protein belongs to the amidase family. GatA subfamily. As to quaternary structure, heterotrimer of A, B and C subunits.

It carries out the reaction L-glutamyl-tRNA(Gln) + L-glutamine + ATP + H2O = L-glutaminyl-tRNA(Gln) + L-glutamate + ADP + phosphate + H(+). Its function is as follows. Allows the formation of correctly charged Gln-tRNA(Gln) through the transamidation of misacylated Glu-tRNA(Gln) in organisms which lack glutaminyl-tRNA synthetase. The reaction takes place in the presence of glutamine and ATP through an activated gamma-phospho-Glu-tRNA(Gln). The chain is Glutamyl-tRNA(Gln) amidotransferase subunit A from Gloeothece citriformis (strain PCC 7424) (Cyanothece sp. (strain PCC 7424)).